We begin with the raw amino-acid sequence, 556 residues long: Arginine--tRNA ligase (556 aa).

The 'HIGH' region motif lies at P117–H127.

This sequence belongs to the class-I aminoacyl-tRNA synthetase family. As to quaternary structure, monomer.

Its subcellular location is the cytoplasm. It carries out the reaction tRNA(Arg) + L-arginine + ATP = L-arginyl-tRNA(Arg) + AMP + diphosphate. The polypeptide is Arginine--tRNA ligase (Cutibacterium acnes (strain DSM 16379 / KPA171202) (Propionibacterium acnes)).